Reading from the N-terminus, the 177-residue chain is Peptidoglycan-associated lipoprotein (177 aa).

The signal sequence occupies residues 1-32 (MSRTNISALSPMQKLARNPAVIAMTLALALAG). Residue Cys33 is the site of N-palmitoyl cysteine attachment. The S-diacylglycerol cysteine moiety is linked to residue Cys33. Residues 59-176 (QQDFTVNVGD…RAVTVLGGAG (118 aa)) form the OmpA-like domain.

This sequence belongs to the Pal lipoprotein family. The Tol-Pal system is composed of five core proteins: the inner membrane proteins TolA, TolQ and TolR, the periplasmic protein TolB and the outer membrane protein Pal. They form a network linking the inner and outer membranes and the peptidoglycan layer.

The protein localises to the cell outer membrane. Functionally, part of the Tol-Pal system, which plays a role in outer membrane invagination during cell division and is important for maintaining outer membrane integrity. The protein is Peptidoglycan-associated lipoprotein of Agrobacterium fabrum (strain C58 / ATCC 33970) (Agrobacterium tumefaciens (strain C58)).